Consider the following 379-residue polypeptide: Putative acetyl-CoA C-acetyltransferase VraB (379 aa).

C86 acts as the Acyl-thioester intermediate in catalysis. The active-site Proton acceptor is the H338.

The protein belongs to the thiolase-like superfamily. Thiolase family.

This Staphylococcus aureus (strain MRSA252) protein is Putative acetyl-CoA C-acetyltransferase VraB (vraB).